The sequence spans 324 residues: Glyoxylate/hydroxypyruvate reductase B (324 aa).

Residues R237 and E266 contribute to the active site. Catalysis depends on H285, which acts as the Proton donor.

This sequence belongs to the D-isomer specific 2-hydroxyacid dehydrogenase family. GhrB subfamily. Homodimer.

Its subcellular location is the cytoplasm. It catalyses the reaction glycolate + NADP(+) = glyoxylate + NADPH + H(+). The enzyme catalyses (R)-glycerate + NAD(+) = 3-hydroxypyruvate + NADH + H(+). The catalysed reaction is (R)-glycerate + NADP(+) = 3-hydroxypyruvate + NADPH + H(+). Functionally, catalyzes the NADPH-dependent reduction of glyoxylate and hydroxypyruvate into glycolate and glycerate, respectively. The protein is Glyoxylate/hydroxypyruvate reductase B of Salmonella typhi.